Consider the following 339-residue polypeptide: Ketol-acid reductoisomerase (NADP(+)) (339 aa).

The 182-residue stretch at 1–182 (MPNRYYEKDG…GCLKAGVIDT (182 aa)) folds into the KARI N-terminal Rossmann domain. NADP(+) contacts are provided by residues 25–28 (YGSQ), serine 51, serine 53, and 83–86 (DHIQ). Histidine 108 is a catalytic residue. Glycine 134 contributes to the NADP(+) binding site. One can recognise a KARI C-terminal knotted domain in the interval 183-328 (NFREETESDL…RELREMMTFL (146 aa)). Aspartate 191, glutamate 195, glutamate 227, and glutamate 231 together coordinate Mg(2+). Serine 252 contributes to the substrate binding site.

It belongs to the ketol-acid reductoisomerase family. Mg(2+) is required as a cofactor.

The catalysed reaction is (2R)-2,3-dihydroxy-3-methylbutanoate + NADP(+) = (2S)-2-acetolactate + NADPH + H(+). It carries out the reaction (2R,3R)-2,3-dihydroxy-3-methylpentanoate + NADP(+) = (S)-2-ethyl-2-hydroxy-3-oxobutanoate + NADPH + H(+). It functions in the pathway amino-acid biosynthesis; L-isoleucine biosynthesis; L-isoleucine from 2-oxobutanoate: step 2/4. Its pathway is amino-acid biosynthesis; L-valine biosynthesis; L-valine from pyruvate: step 2/4. Involved in the biosynthesis of branched-chain amino acids (BCAA). Catalyzes an alkyl-migration followed by a ketol-acid reduction of (S)-2-acetolactate (S2AL) to yield (R)-2,3-dihydroxy-isovalerate. In the isomerase reaction, S2AL is rearranged via a Mg-dependent methyl migration to produce 3-hydroxy-3-methyl-2-ketobutyrate (HMKB). In the reductase reaction, this 2-ketoacid undergoes a metal-dependent reduction by NADPH to yield (R)-2,3-dihydroxy-isovalerate. The chain is Ketol-acid reductoisomerase (NADP(+)) from Solibacter usitatus (strain Ellin6076).